We begin with the raw amino-acid sequence, 307 residues long: Ribonuclease Z (307 aa).

Zn(2+)-binding residues include histidine 63, histidine 65, aspartate 67, histidine 68, histidine 141, aspartate 212, and histidine 270. Aspartate 67 serves as the catalytic Proton acceptor.

It belongs to the RNase Z family. Homodimer. Zn(2+) is required as a cofactor.

The catalysed reaction is Endonucleolytic cleavage of RNA, removing extra 3' nucleotides from tRNA precursor, generating 3' termini of tRNAs. A 3'-hydroxy group is left at the tRNA terminus and a 5'-phosphoryl group is left at the trailer molecule.. In terms of biological role, zinc phosphodiesterase, which displays some tRNA 3'-processing endonuclease activity. Probably involved in tRNA maturation, by removing a 3'-trailer from precursor tRNA. The sequence is that of Ribonuclease Z from Bacillus thuringiensis subsp. konkukian (strain 97-27).